The sequence spans 255 residues: 1-(5-phosphoribosyl)-5-[(5-phosphoribosylamino)methylideneamino] imidazole-4-carboxamide isomerase (255 aa).

Residue aspartate 8 is the Proton acceptor of the active site. Aspartate 129 acts as the Proton donor in catalysis.

The protein belongs to the HisA/HisF family.

The protein localises to the cytoplasm. It carries out the reaction 1-(5-phospho-beta-D-ribosyl)-5-[(5-phospho-beta-D-ribosylamino)methylideneamino]imidazole-4-carboxamide = 5-[(5-phospho-1-deoxy-D-ribulos-1-ylimino)methylamino]-1-(5-phospho-beta-D-ribosyl)imidazole-4-carboxamide. It participates in amino-acid biosynthesis; L-histidine biosynthesis; L-histidine from 5-phospho-alpha-D-ribose 1-diphosphate: step 4/9. This Prochlorococcus marinus (strain MIT 9303) protein is 1-(5-phosphoribosyl)-5-[(5-phosphoribosylamino)methylideneamino] imidazole-4-carboxamide isomerase.